Reading from the N-terminus, the 432-residue chain is Protein distal antenna-related (432 aa).

One can recognise an HTH psq-type domain in the interval 15–66; that stretch reads TRGKRPLRNLTPNDKVRAIQRIHNGETKASVSRDLGVPESTLRGWCKNEQKL. The segment at residues 42–62 is a DNA-binding region (H-T-H motif); that stretch reads KASVSRDLGVPESTLRGWCKN. 2 disordered regions span residues 195-221 and 401-432; these read ESADTDIKSPQSTTDITDTAREENSTK and SCASVSSRNNSRSQTPDKSTATSIACLSDGEQ. 2 stretches are compositionally biased toward polar residues: residues 202–211 and 401–425; these read KSPQSTTDIT and SCASVSSRNNSRSQTPDKSTATSIA.

As to quaternary structure, interacts with itself, dan, ey and dac to form a complex (or complexes) containing the RD factors.

Its subcellular location is the nucleus. Probable transcription factor with a role in the retinal determination (RD) network. Regulates ato expression and is required for normal R8 induction and differentiation. Danr appears to repress Dan expression, but Dan is required for Danr expression anterior to the morphogenetic furrow (MF). Dan and Danr lie downstream of so and require dac function for highest levels of expression. Contributes to differentiation of antenna-specific characteristics; effector gene that acts downstream of homothorax (hth), Distal-less (Dll), cut (ct) and spineless (ss) genes to control differentiation of distal antennal structures. The chain is Protein distal antenna-related from Drosophila pseudoobscura pseudoobscura (Fruit fly).